The following is a 78-amino-acid chain: Small acidic protein 2 (78 aa).

In terms of tissue distribution, expressed in siliques and anthers.

Functionally, mediates responses to the synthetic auxin 2,4-dichlorophenoxyacetic acid (2,4-D). Not involved in the response to indole-3-acetic acid (IAA). May interact with RUB modification-related components and may regulate the culling-ring ubiquitin E3 ligase complex (CRL) activity. The chain is Small acidic protein 2 (SMAP2) from Arabidopsis thaliana (Mouse-ear cress).